The chain runs to 292 residues: Ribosomal protein L11 methyltransferase (292 aa).

4 residues coordinate S-adenosyl-L-methionine: Thr143, Gly164, Asp186, and Asn228.

Belongs to the methyltransferase superfamily. PrmA family.

The protein resides in the cytoplasm. The enzyme catalyses L-lysyl-[protein] + 3 S-adenosyl-L-methionine = N(6),N(6),N(6)-trimethyl-L-lysyl-[protein] + 3 S-adenosyl-L-homocysteine + 3 H(+). Methylates ribosomal protein L11. The protein is Ribosomal protein L11 methyltransferase of Tolumonas auensis (strain DSM 9187 / NBRC 110442 / TA 4).